Here is a 197-residue protein sequence, read N- to C-terminus: uncharacterized protein (197 aa).

6 helical membrane-spanning segments follow: residues 11-31, 50-70, 79-99, 108-128, 136-156, and 158-178; these read AAMV…IPLI, ILAI…AYLG, AIVA…GLFA, AIVA…LGIM, ALKG…FIGL, and TLQI…AFHF.

It belongs to the chromate ion transporter (CHR) (TC 2.A.51) family.

It localises to the cell membrane. This is an uncharacterized protein from Bacillus subtilis (strain 168).